The following is a 68-amino-acid chain: Metallothionein-3 (68 aa).

M1 bears the N-acetylmethionine mark. The interval 1-30 (MDPETCPCPSGGSCTCADSCKCEGCKCTSC) is beta. The a divalent metal cation site is built by C6, C8, C14, C16, C20, C22, C25, C27, and C30. Residues 31–68 (KKSCCSCCPAECEKCAKDCVCKGGEAAEAEAEKCSCCQ) form an alpha region. Phosphoserine is present on S33. The a divalent metal cation site is built by C34, C35, C37, C38, C42, C45, C49, C51, C64, C66, and C67.

It belongs to the metallothionein superfamily. Type 1 family. In terms of tissue distribution, abundant in a subset of astrocytes in the normal human brain, but greatly reduced in the Alzheimer disease (AD) brain.

Functionally, binds heavy metals. Contains three zinc and three copper atoms per polypeptide chain and only a negligible amount of cadmium. Inhibits survival and neurite formation of cortical neurons in vitro. The polypeptide is Metallothionein-3 (MT3) (Homo sapiens (Human)).